The chain runs to 329 residues: Indolepyruvate C-methyltransferase (329 aa).

Belongs to the methyltransferase superfamily.

The catalysed reaction is indole-3-pyruvate + S-adenosyl-L-methionine = (R)-3-(indol-3-yl)-2-oxobutanoate + S-adenosyl-L-homocysteine + H(+). With respect to regulation, strongly inhibited by the thiol reagents p-chloromercuribenzoate and N-ethylmaleimide. Partially inhibited by o-phenanthroline and 2,2'-dipyridyl. Competitively inhibited by L-tryptophan and indolmycin. Functionally, involved in the biosynthesis of the antibiotic indolmycin, an inhibitor of the bacterial tryptophan-tRNA synthetases. Catalyzes the transfer of a methyl group from S-adenosyl-L-methionine to position 3 of the aliphatic side chain of (indol-3-yl)pyruvate to yield 3-methylindolepyruvate. This Streptomyces griseus protein is Indolepyruvate C-methyltransferase.